The following is a 97-amino-acid chain: uncharacterized protein (97 aa).

Ser-2 is subject to N-acetylserine.

This is an uncharacterized protein from Mycobacterium tuberculosis (strain ATCC 25618 / H37Rv).